We begin with the raw amino-acid sequence, 316 residues long: Taste receptor type 2 member 3 (316 aa).

Over 1 to 7 the chain is Extracellular; that stretch reads MFGFIEG. The helical transmembrane segment at 8–28 threads the bilayer; sequence VFLVLTITEFILGNLVNGFIV. Residues 29-50 are Cytoplasmic-facing; that stretch reads SINSSYWFKSKKISLSNFIITS. Residues 51–71 form a helical membrane-spanning segment; it reads LALFRIFLLWIIFIDSLIIVF. Topologically, residues 72–86 are extracellular; the sequence is SYQTHDSGIMMQLID. A helical transmembrane segment spans residues 87-107; that stretch reads VFWTFTNHFSIWLISCLSVFY. The Cytoplasmic segment spans residues 108-128; sequence CLKIASFSHPSFLWLKWRASR. Residues 129–149 form a helical membrane-spanning segment; that stretch reads VVVGMLWGALLLSCVSTMSLM. Residues 150–186 are Extracellular-facing; sequence NEFKIYSALTRSKDTPNMTEYIRLKRQEYNLMHVLGN. N-linked (GlcNAc...) asparagine glycosylation occurs at asparagine 166. The chain crosses the membrane as a helical span at residues 187-207; that stretch reads LWKIPSLIVSLVAYLLLLLSL. The Cytoplasmic portion of the chain corresponds to 208-234; sequence GKHTQQMQQYSIDSRDQSAEAHKRAMR. Residues 235–255 traverse the membrane as a helical segment; that stretch reads IISSFLLFFLFYFLSFMILSS. Residues 256–266 are Extracellular-facing; it reads SRFLPETRIAR. Residues 267–287 traverse the membrane as a helical segment; it reads IIGVVISMSYLVGDSFILIVC. Over 288–316 the chain is Cytoplasmic; that stretch reads NNKLKHTFVAMLPCECGHLKPGSKGPSAS.

This sequence belongs to the G-protein coupled receptor T2R family.

The protein localises to the membrane. In terms of biological role, gustducin-coupled receptor implicated in the perception of bitter compounds in the oral cavity and the gastrointestinal tract. Signals through PLCB2 and the calcium-regulated cation channel TRPM5. This chain is Taste receptor type 2 member 3 (Tas2r3), found in Mus musculus (Mouse).